The primary structure comprises 160 residues: 6,7-dimethyl-8-ribityllumazine synthase (160 aa).

5-amino-6-(D-ribitylamino)uracil contacts are provided by residues tryptophan 27, 59 to 61, and 81 to 83; these read AIE and VVI. 86–87 provides a ligand contact to (2S)-2-hydroxy-3-oxobutyl phosphate; that stretch reads QT. Histidine 89 (proton donor) is an active-site residue. Asparagine 114 contacts 5-amino-6-(D-ribitylamino)uracil. Arginine 128 serves as a coordination point for (2S)-2-hydroxy-3-oxobutyl phosphate.

Belongs to the DMRL synthase family. As to quaternary structure, homopentamer.

The enzyme catalyses (2S)-2-hydroxy-3-oxobutyl phosphate + 5-amino-6-(D-ribitylamino)uracil = 6,7-dimethyl-8-(1-D-ribityl)lumazine + phosphate + 2 H2O + H(+). The protein operates within cofactor biosynthesis; riboflavin biosynthesis; riboflavin from 2-hydroxy-3-oxobutyl phosphate and 5-amino-6-(D-ribitylamino)uracil: step 1/2. Functionally, catalyzes the formation of 6,7-dimethyl-8-ribityllumazine by condensation of 5-amino-6-(D-ribitylamino)uracil with 3,4-dihydroxy-2-butanone 4-phosphate. This is the penultimate step in the biosynthesis of riboflavin. In Mycobacterium sp. (strain JLS), this protein is 6,7-dimethyl-8-ribityllumazine synthase.